Reading from the N-terminus, the 131-residue chain is Small ribosomal subunit protein uS8 (131 aa).

This sequence belongs to the universal ribosomal protein uS8 family. In terms of assembly, part of the 30S ribosomal subunit. Contacts proteins S5 and S12.

In terms of biological role, one of the primary rRNA binding proteins, it binds directly to 16S rRNA central domain where it helps coordinate assembly of the platform of the 30S subunit. The chain is Small ribosomal subunit protein uS8 from Wolbachia pipientis wMel.